We begin with the raw amino-acid sequence, 348 residues long: RNA 3'-terminal phosphate cyclase (348 aa).

Residues Gln-107 and 290 to 294 contribute to the ATP site; that span reads HLADQ. His-316 functions as the Tele-AMP-histidine intermediate in the catalytic mechanism.

Belongs to the RNA 3'-terminal cyclase family. Type 1 subfamily.

It localises to the cytoplasm. The enzyme catalyses a 3'-end 3'-phospho-ribonucleotide-RNA + ATP = a 3'-end 2',3'-cyclophospho-ribonucleotide-RNA + AMP + diphosphate. Functionally, catalyzes the conversion of 3'-phosphate to a 2',3'-cyclic phosphodiester at the end of RNA. The mechanism of action of the enzyme occurs in 3 steps: (A) adenylation of the enzyme by ATP; (B) transfer of adenylate to an RNA-N3'P to produce RNA-N3'PP5'A; (C) and attack of the adjacent 2'-hydroxyl on the 3'-phosphorus in the diester linkage to produce the cyclic end product. The biological role of this enzyme is unknown but it is likely to function in some aspects of cellular RNA processing. In Nostoc punctiforme (strain ATCC 29133 / PCC 73102), this protein is RNA 3'-terminal phosphate cyclase.